The following is a 540-amino-acid chain: Putative cysteine ligase BshC (540 aa).

The stretch at 457–477 (EKNRAFIQGQIAFLKERMERE) forms a coiled coil.

It belongs to the BshC family.

In terms of biological role, involved in bacillithiol (BSH) biosynthesis. May catalyze the last step of the pathway, the addition of cysteine to glucosamine malate (GlcN-Mal) to generate BSH. This is Putative cysteine ligase BshC from Shouchella clausii (strain KSM-K16) (Alkalihalobacillus clausii).